We begin with the raw amino-acid sequence, 400 residues long: Bifunctional enzyme IspD/IspF (400 aa).

The tract at residues 1–240 is 2-C-methyl-D-erythritol 4-phosphate cytidylyltransferase; that stretch reads MQESTMKFGI…EKLSHALPDV (240 aa). Residues 241–400 form a 2-C-methyl-D-erythritol 2,4-cyclodiphosphate synthase region; sequence RTGNGYDVHQ…ATVVYQGRPL (160 aa). 2 residues coordinate a divalent metal cation: Asp247 and His249. Residues 247 to 249 and 273 to 274 contribute to the 4-CDP-2-C-methyl-D-erythritol 2-phosphate site; these read DVH and HS. Position 281 (His281) interacts with a divalent metal cation. 4-CDP-2-C-methyl-D-erythritol 2-phosphate-binding positions include 295-297, 371-374, Phe378, and Arg381; these read DIG and TTNE.

This sequence in the N-terminal section; belongs to the IspD/TarI cytidylyltransferase family. IspD subfamily. The protein in the C-terminal section; belongs to the IspF family. A divalent metal cation serves as cofactor.

It catalyses the reaction 2-C-methyl-D-erythritol 4-phosphate + CTP + H(+) = 4-CDP-2-C-methyl-D-erythritol + diphosphate. The catalysed reaction is 4-CDP-2-C-methyl-D-erythritol 2-phosphate = 2-C-methyl-D-erythritol 2,4-cyclic diphosphate + CMP. It participates in isoprenoid biosynthesis; isopentenyl diphosphate biosynthesis via DXP pathway; isopentenyl diphosphate from 1-deoxy-D-xylulose 5-phosphate: step 2/6. The protein operates within isoprenoid biosynthesis; isopentenyl diphosphate biosynthesis via DXP pathway; isopentenyl diphosphate from 1-deoxy-D-xylulose 5-phosphate: step 4/6. Bifunctional enzyme that catalyzes the formation of 4-diphosphocytidyl-2-C-methyl-D-erythritol from CTP and 2-C-methyl-D-erythritol 4-phosphate (MEP) (IspD), and catalyzes the conversion of 4-diphosphocytidyl-2-C-methyl-D-erythritol 2-phosphate (CDP-ME2P) to 2-C-methyl-D-erythritol 2,4-cyclodiphosphate (ME-CPP) with a corresponding release of cytidine 5-monophosphate (CMP) (IspF). This chain is Bifunctional enzyme IspD/IspF, found in Agrobacterium fabrum (strain C58 / ATCC 33970) (Agrobacterium tumefaciens (strain C58)).